The following is a 180-amino-acid chain: MAARLQEFYKEQVVPKLIEQFGYKSVMEVPRITKITLNMGLGEAINDKKIIENAVGDLTKIAGQKPVVTKAKKAIAGFKIRQGYPIGAMVTLRGERMFEFLDRFVTVALPRVRDFRGVSGRSFDGRGNYNIGVKEQIIFPEIEYDKIDALRGLNISITTTAKNDEEAKALLGAFKFPFRN.

The protein belongs to the universal ribosomal protein uL5 family. In terms of assembly, part of the 50S ribosomal subunit; part of the 5S rRNA/L5/L18/L25 subcomplex. Contacts the 5S rRNA and the P site tRNA. Forms a bridge to the 30S subunit in the 70S ribosome.

In terms of biological role, this is one of the proteins that bind and probably mediate the attachment of the 5S RNA into the large ribosomal subunit, where it forms part of the central protuberance. In the 70S ribosome it contacts protein S13 of the 30S subunit (bridge B1b), connecting the 2 subunits; this bridge is implicated in subunit movement. Contacts the P site tRNA; the 5S rRNA and some of its associated proteins might help stabilize positioning of ribosome-bound tRNAs. The polypeptide is Large ribosomal subunit protein uL5 (Cupriavidus necator (strain ATCC 17699 / DSM 428 / KCTC 22496 / NCIMB 10442 / H16 / Stanier 337) (Ralstonia eutropha)).